The primary structure comprises 452 residues: tRNA modification GTPase MnmE (452 aa).

The (6S)-5-formyl-5,6,7,8-tetrahydrofolate site is built by arginine 22, glutamate 79, and lysine 119. The TrmE-type G domain maps to 215–375 (GMKVVIAGRP…LRQHLKQSMG (161 aa)). Asparagine 225 is a binding site for K(+). GTP is bound by residues 225–230 (NAGKSS), 244–250 (TDIAGTT), 269–272 (DTAG), and 333–336 (NKAD). A Mg(2+)-binding site is contributed by serine 229. 3 residues coordinate K(+): threonine 244, isoleucine 246, and threonine 249. Residue threonine 250 participates in Mg(2+) binding. Lysine 452 is a (6S)-5-formyl-5,6,7,8-tetrahydrofolate binding site.

Belongs to the TRAFAC class TrmE-Era-EngA-EngB-Septin-like GTPase superfamily. TrmE GTPase family. As to quaternary structure, homodimer. Heterotetramer of two MnmE and two MnmG subunits. K(+) is required as a cofactor.

It is found in the cytoplasm. Its function is as follows. Exhibits a very high intrinsic GTPase hydrolysis rate. Involved in the addition of a carboxymethylaminomethyl (cmnm) group at the wobble position (U34) of certain tRNAs, forming tRNA-cmnm(5)s(2)U34. In Histophilus somni (strain 2336) (Haemophilus somnus), this protein is tRNA modification GTPase MnmE.